The chain runs to 826 residues: Lon protease (826 aa).

In terms of domain architecture, Lon N-terminal spans 26–221 (LPMLPVRDVV…AVNGFVSREV (196 aa)). 373 to 380 (GPPGVGKT) contacts ATP. The Lon proteolytic domain maps to 609–790 (EPQIGLATGL…NEVLEKALLP (182 aa)). Active-site residues include S696 and K739. Residues 788-826 (LLPAEKKKAPPKKKPPKKAAKPKAKKTQPKAKTTEAADK) are disordered. Residues 796–816 (APPKKKPPKKAAKPKAKKTQP) show a composition bias toward basic residues.

This sequence belongs to the peptidase S16 family. Homohexamer. Organized in a ring with a central cavity.

It is found in the cytoplasm. It catalyses the reaction Hydrolysis of proteins in presence of ATP.. Its function is as follows. ATP-dependent serine protease that mediates the selective degradation of mutant and abnormal proteins as well as certain short-lived regulatory proteins. Required for cellular homeostasis and for survival from DNA damage and developmental changes induced by stress. Degrades polypeptides processively to yield small peptide fragments that are 5 to 10 amino acids long. Binds to DNA in a double-stranded, site-specific manner. The protein is Lon protease of Desulfatibacillum aliphaticivorans.